The chain runs to 110 residues: Insulin (110 aa).

The first 24 residues, 1-24 (MALWMHLLTVLALLALWGPNTGQA), serve as a signal peptide directing secretion. 3 disulfide bridges follow: Cys31–Cys96, Cys43–Cys109, and Cys95–Cys100. Residues 57 to 87 (ELEDPQVEQTELGMGLGAGGLQPLALEMALQ) constitute a propeptide, c peptide.

This sequence belongs to the insulin family. In terms of assembly, heterodimer of a B chain and an A chain linked by two disulfide bonds.

It is found in the secreted. Insulin decreases blood glucose concentration. It increases cell permeability to monosaccharides, amino acids and fatty acids. It accelerates glycolysis, the pentose phosphate cycle, and glycogen synthesis in liver. This is Insulin (INS) from Cavia porcellus (Guinea pig).